The sequence spans 317 residues: Aspartate carbamoyltransferase catalytic subunit (317 aa).

Residues Arg66 and Thr67 each coordinate carbamoyl phosphate. Lys94 is a binding site for L-aspartate. Carbamoyl phosphate is bound by residues Arg116, His144, and Gln147. Residues Arg177 and Arg231 each contribute to the L-aspartate site. Positions 272 and 273 each coordinate carbamoyl phosphate.

The protein belongs to the aspartate/ornithine carbamoyltransferase superfamily. ATCase family. In terms of assembly, heterododecamer (2C3:3R2) of six catalytic PyrB chains organized as two trimers (C3), and six regulatory PyrI chains organized as three dimers (R2).

It carries out the reaction carbamoyl phosphate + L-aspartate = N-carbamoyl-L-aspartate + phosphate + H(+). The protein operates within pyrimidine metabolism; UMP biosynthesis via de novo pathway; (S)-dihydroorotate from bicarbonate: step 2/3. In terms of biological role, catalyzes the condensation of carbamoyl phosphate and aspartate to form carbamoyl aspartate and inorganic phosphate, the committed step in the de novo pyrimidine nucleotide biosynthesis pathway. The sequence is that of Aspartate carbamoyltransferase catalytic subunit from Rhodopseudomonas palustris (strain ATCC BAA-98 / CGA009).